The sequence spans 65 residues: Defensin Cg-Defm (65 aa).

The N-terminal stretch at 1–22 is a signal peptide; the sequence is MKVFVLLTLAVLLMVSADMAFA. Beta-D-GlcNAc-(1-&gt;4)-Mur2Ac(oyl-L-Ala-gamma-D-Glu-L-Lys-D-Ala-D-Ala)-di-trans,octa-cis-undecaprenyl diphosphate contacts are provided by Phe24, Gly25, and Cys26. Intrachain disulfides connect Cys26–Cys47, Cys33–Cys56, Cys37–Cys58, and Cys42–Cys61. The segment at 27 to 30 is binds to membrane interface; it reads PGNQ. His36 serves as a coordination point for beta-D-GlcNAc-(1-&gt;4)-Mur2Ac(oyl-L-Ala-gamma-D-Glu-L-Lys-D-Ala-D-Ala)-di-trans,octa-cis-undecaprenyl diphosphate. Positions 48 to 54 are binds to membrane interface; the sequence is DAATLWL. Residue Cys56 participates in beta-D-GlcNAc-(1-&gt;4)-Mur2Ac(oyl-L-Ala-gamma-D-Glu-L-Lys-D-Ala-D-Ala)-di-trans,octa-cis-undecaprenyl diphosphate binding.

Belongs to the invertebrate defensin family. In terms of tissue distribution, expressed in the mantle. Low or no expression in most of the organs analyzed, including hemocytes, heart, digestive gland, and gills.

The protein localises to the secreted. It localises to the target cell membrane. In terms of biological role, antibacterial peptide mostly active against Gram-positive bacteria (M.lysodeikticus, S.aureus, and the marine bacteria, B.stationis, and M.maritypicum). It acts by selectively inhibiting peptidoglycan biosynthesis through complex formation with the cell wall precursor lipid II (1:1 molar ratio) thus inhibiting cell wall synthesis. It does not disrupt cell membranes. Is noticeably more potent than Cg-Defh1. It shows no or limited activities against Gram-negative bacteria and filamentous fungi. The polypeptide is Defensin Cg-Defm (Magallana gigas (Pacific oyster)).